A 929-amino-acid polypeptide reads, in one-letter code: Isoleucine--tRNA ligase (929 aa).

The 'HIGH' region motif lies at 58-68 (PYANGDIHIGH). Position 563 (Glu563) interacts with L-isoleucyl-5'-AMP. The 'KMSKS' region motif lies at 605-609 (KMSKS). Lys608 is a binding site for ATP. Zn(2+) is bound by residues Cys892, Cys895, Cys912, and Cys915.

This sequence belongs to the class-I aminoacyl-tRNA synthetase family. IleS type 1 subfamily. Monomer. The cofactor is Zn(2+).

It is found in the cytoplasm. The enzyme catalyses tRNA(Ile) + L-isoleucine + ATP = L-isoleucyl-tRNA(Ile) + AMP + diphosphate. Its function is as follows. Catalyzes the attachment of isoleucine to tRNA(Ile). As IleRS can inadvertently accommodate and process structurally similar amino acids such as valine, to avoid such errors it has two additional distinct tRNA(Ile)-dependent editing activities. One activity is designated as 'pretransfer' editing and involves the hydrolysis of activated Val-AMP. The other activity is designated 'posttransfer' editing and involves deacylation of mischarged Val-tRNA(Ile). In Neisseria gonorrhoeae (strain ATCC 700825 / FA 1090), this protein is Isoleucine--tRNA ligase.